A 219-amino-acid polypeptide reads, in one-letter code: uncharacterized protein (219 aa).

The segment covering 1–17 has biased composition (low complexity); it reads MIINNQNSPQSINTPSS. Residues 1–31 are disordered; sequence MIINNQNSPQSINTPSSVSSRQHINKSKKKK. The next 2 helical transmembrane spans lie at 49-69 and 83-105; these read SLAT…LVCK and LVYR…SYIG. The interval 135–219 is disordered; sequence NHRSPIPLTN…NSDLEIPIPI (85 aa). Residues 144–212 show a composition bias toward low complexity; the sequence is NLNNNNNNNN…SNNNNDNNSD (69 aa).

Its subcellular location is the membrane. This is an uncharacterized protein from Dictyostelium discoideum (Social amoeba).